The primary structure comprises 213 residues: Pyridoxine/pyridoxamine 5'-phosphate oxidase (213 aa).

Residues 60 to 65 (RMVLMK), 75 to 76 (YS), Lys82, and Gln104 each bind FMN. Lys65 contributes to the substrate binding site. Tyr122 and Arg126 together coordinate substrate. FMN is bound by residues 139-140 (QS) and Trp184. Residue 190–192 (RLH) coordinates substrate. An FMN-binding site is contributed by Arg194.

This sequence belongs to the pyridoxamine 5'-phosphate oxidase family. As to quaternary structure, homodimer. FMN serves as cofactor.

It catalyses the reaction pyridoxamine 5'-phosphate + O2 + H2O = pyridoxal 5'-phosphate + H2O2 + NH4(+). The catalysed reaction is pyridoxine 5'-phosphate + O2 = pyridoxal 5'-phosphate + H2O2. Its pathway is cofactor metabolism; pyridoxal 5'-phosphate salvage; pyridoxal 5'-phosphate from pyridoxamine 5'-phosphate: step 1/1. It participates in cofactor metabolism; pyridoxal 5'-phosphate salvage; pyridoxal 5'-phosphate from pyridoxine 5'-phosphate: step 1/1. In terms of biological role, catalyzes the oxidation of either pyridoxine 5'-phosphate (PNP) or pyridoxamine 5'-phosphate (PMP) into pyridoxal 5'-phosphate (PLP). This is Pyridoxine/pyridoxamine 5'-phosphate oxidase from Nitrobacter hamburgensis (strain DSM 10229 / NCIMB 13809 / X14).